Consider the following 121-residue polypeptide: Large ribosomal subunit protein bL19 (121 aa).

Belongs to the bacterial ribosomal protein bL19 family.

In terms of biological role, this protein is located at the 30S-50S ribosomal subunit interface and may play a role in the structure and function of the aminoacyl-tRNA binding site. The polypeptide is Large ribosomal subunit protein bL19 (Amoebophilus asiaticus (strain 5a2)).